The chain runs to 431 residues: Trigger factor (431 aa).

One can recognise a PPIase FKBP-type domain in the interval 160–245 (EDRVTIDFSG…LKKVEVMVLP (86 aa)).

Belongs to the FKBP-type PPIase family. Tig subfamily.

It localises to the cytoplasm. The enzyme catalyses [protein]-peptidylproline (omega=180) = [protein]-peptidylproline (omega=0). In terms of biological role, involved in protein export. Acts as a chaperone by maintaining the newly synthesized protein in an open conformation. Functions as a peptidyl-prolyl cis-trans isomerase. This Actinobacillus succinogenes (strain ATCC 55618 / DSM 22257 / CCUG 43843 / 130Z) protein is Trigger factor.